A 129-amino-acid chain; its full sequence is uncharacterized protein (129 aa).

Residues 23–101 form a disordered region; sequence KASTSSESCQ…TAATRTTSKK (79 aa). Composition is skewed to basic and acidic residues over residues 31-40 and 67-80; these read CQRRGVRDDT and EGDR…EKEP.

This is an uncharacterized protein from Ictaluridae (bullhead catfishes).